The following is a 396-amino-acid chain: S-adenosylmethionine synthase (396 aa).

An ATP-binding site is contributed by His16. Asp18 is a Mg(2+) binding site. Residue Glu44 coordinates K(+). L-methionine is bound by residues Glu57 and Gln100. A flexible loop region spans residues 100-110 (QSPDIAQGVDR). ATP-binding positions include 167 to 169 (DAK), 233 to 234 (RF), Asp242, 248 to 249 (RK), Ala265, and Lys269. Asp242 is an L-methionine binding site. An L-methionine-binding site is contributed by Lys273.

The protein belongs to the AdoMet synthase family. As to quaternary structure, homotetramer; dimer of dimers. Mg(2+) serves as cofactor. It depends on K(+) as a cofactor.

The protein resides in the cytoplasm. It carries out the reaction L-methionine + ATP + H2O = S-adenosyl-L-methionine + phosphate + diphosphate. Its pathway is amino-acid biosynthesis; S-adenosyl-L-methionine biosynthesis; S-adenosyl-L-methionine from L-methionine: step 1/1. Functionally, catalyzes the formation of S-adenosylmethionine (AdoMet) from methionine and ATP. The overall synthetic reaction is composed of two sequential steps, AdoMet formation and the subsequent tripolyphosphate hydrolysis which occurs prior to release of AdoMet from the enzyme. The protein is S-adenosylmethionine synthase of Paraburkholderia xenovorans (strain LB400).